A 288-amino-acid chain; its full sequence is Protoheme IX farnesyltransferase (288 aa).

9 helical membrane passes run I8 to A28, V35 to F55, I75 to L95, F105 to L125, S130 to C150, F161 to V181, I205 to G225, N230 to F250, and I265 to K285.

The protein belongs to the UbiA prenyltransferase family. Protoheme IX farnesyltransferase subfamily.

The protein localises to the cell membrane. The enzyme catalyses heme b + (2E,6E)-farnesyl diphosphate + H2O = Fe(II)-heme o + diphosphate. It functions in the pathway porphyrin-containing compound metabolism; heme O biosynthesis; heme O from protoheme: step 1/1. Its function is as follows. Converts heme B (protoheme IX) to heme O by substitution of the vinyl group on carbon 2 of heme B porphyrin ring with a hydroxyethyl farnesyl side group. The polypeptide is Protoheme IX farnesyltransferase (Wigglesworthia glossinidia brevipalpis).